The following is a 482-amino-acid chain: 7-deoxyloganetic acid glucosyl transferase (482 aa).

The active-site Proton acceptor is the H22. H22 contributes to the an anthocyanidin binding site. The Charge relay role is filled by D127. Residues T149, A362, Q364, H379, W382, N383, S384, and E387 each coordinate UDP-alpha-D-glucose. A402 is a binding site for an anthocyanidin. D403 and Q404 together coordinate UDP-alpha-D-glucose.

Belongs to the UDP-glycosyltransferase family. As to expression, expressed in the leaf internal phloem-associated parenchyma (IPAP) inside the mesophyll. Mostly observed in leaves, roots and stems, and, to a lower extent, in flowers.

The protein localises to the nucleus. Its subcellular location is the cytoplasm. The protein resides in the cytosol. It carries out the reaction 7-deoxyloganetate + UDP-alpha-D-glucose = 7-deoxyloganate + UDP + H(+). It functions in the pathway alkaloid biosynthesis. In terms of biological role, component of the seco-iridoid and derivatives monoterpenoid indole alkaloids (MIAs, e.g. vincristine, quinine, and strychnine) biosynthesis pathway. Catalyzes the glucosylation of 7-deoxyloganetic acid to form 7-deoxyloganic acid using UDP-glucose as the sugar donor. Inactive with loganetic acid, loganetin, iridodial, iridotrial, 8-OH-geraniol, jasmonic acid, gibberellic acid, indole acetic acid, salicylic acid, abscisic acid, zeatin and luteolin. The sequence is that of 7-deoxyloganetic acid glucosyl transferase from Catharanthus roseus (Madagascar periwinkle).